A 249-amino-acid polypeptide reads, in one-letter code: Oxidoreductase asL5 (249 aa).

Ile-21, Lys-45, Asn-90, Tyr-155, Lys-159, Ile-188, and Thr-190 together coordinate NADP(+). The active-site Proton acceptor is the Tyr-155. Lys-159 acts as the Lowers pKa of active site Tyr in catalysis.

The protein belongs to the short-chain dehydrogenases/reductases (SDR) family.

Functionally, oxidoreductase; part of the gene cluster that mediates the biosynthesis of xenovulene A, an unusual meroterpenoid that has potent inhibitory effects on the human gamma-aminobutyrate A (GABAA) benzodiazepine receptor. The first step of xenovulene A biosynthesis is the biosynthesis of 3-methylorcinaldehyde performed by the non-reducing polyketide synthase aspks1. The salicylate hydroxylase asL1 then catalyzes the oxidative dearomatization of 3-methylorcinaldehyde to yield a dearomatized hydroxycyclohexadione. The 2-oxoglutarate-dependent dioxygenase asL3 further catalyzes the oxidative ring expansion to provide the first tropolone metabolite. The cytochrome P450 monooxygenase asR2 allows the synthesis of tropolone hemiacetal. In parallel, a previously unrecognised class of terpene cyclase, asR6, produces alpha-humulene from farnesylpyrophosphate (FPP). The putative Diels-Alderase asR5 probably catalyzes the formation of the tropolone-humulene skeleton by linking humulene and the polyketide moiety. Oxidative-ring contractions catalyzed by asL4 and asL6 then processively remove carbon atoms from the polyketide to yield xenovulene A. The chain is Oxidoreductase asL5 from Sarocladium schorii (Acremonium strictum (strain IMI 501407)).